Reading from the N-terminus, the 350-residue chain is Selenide, water dikinase (350 aa).

Sec15 is an active-site residue. Residue Sec15 is a non-standard amino acid, selenocysteine. ATP-binding positions include Lys18 and 47 to 49; that span reads HNE. Asp50 is a binding site for Mg(2+). ATP contacts are provided by residues Asp67, Asp90, and 138 to 140; that span reads GHS. Residue Asp90 coordinates Mg(2+). Asp227 is a Mg(2+) binding site.

It belongs to the selenophosphate synthase 1 family. Class I subfamily. As to quaternary structure, homodimer. Mg(2+) is required as a cofactor.

The catalysed reaction is hydrogenselenide + ATP + H2O = selenophosphate + AMP + phosphate + 2 H(+). Its function is as follows. Synthesizes selenophosphate from selenide and ATP. This is Selenide, water dikinase from Nitratidesulfovibrio vulgaris (strain DSM 19637 / Miyazaki F) (Desulfovibrio vulgaris).